The chain runs to 104 residues: Nucleoid-associated protein OB0030 (104 aa).

The segment at Met-1–Gln-23 is disordered.

The protein belongs to the YbaB/EbfC family. In terms of assembly, homodimer.

It is found in the cytoplasm. It localises to the nucleoid. Its function is as follows. Binds to DNA and alters its conformation. May be involved in regulation of gene expression, nucleoid organization and DNA protection. This is Nucleoid-associated protein OB0030 from Oceanobacillus iheyensis (strain DSM 14371 / CIP 107618 / JCM 11309 / KCTC 3954 / HTE831).